A 264-amino-acid polypeptide reads, in one-letter code: 4-hydroxy-tetrahydrodipicolinate reductase (264 aa).

10–15 provides a ligand contact to NAD(+); that stretch reads GCLGRQ. Residue Arg-37 coordinates NADP(+). NAD(+) contacts are provided by residues 99–101 and 121–124; these read GTT and SANL. Catalysis depends on His-153, which acts as the Proton donor/acceptor. Residue His-154 coordinates (S)-2,3,4,5-tetrahydrodipicolinate. Lys-157 acts as the Proton donor in catalysis. Position 163–164 (163–164) interacts with (S)-2,3,4,5-tetrahydrodipicolinate; sequence GT.

It belongs to the DapB family.

The protein resides in the cytoplasm. It catalyses the reaction (S)-2,3,4,5-tetrahydrodipicolinate + NAD(+) + H2O = (2S,4S)-4-hydroxy-2,3,4,5-tetrahydrodipicolinate + NADH + H(+). The enzyme catalyses (S)-2,3,4,5-tetrahydrodipicolinate + NADP(+) + H2O = (2S,4S)-4-hydroxy-2,3,4,5-tetrahydrodipicolinate + NADPH + H(+). Its pathway is amino-acid biosynthesis; L-lysine biosynthesis via DAP pathway; (S)-tetrahydrodipicolinate from L-aspartate: step 4/4. Its function is as follows. Catalyzes the conversion of 4-hydroxy-tetrahydrodipicolinate (HTPA) to tetrahydrodipicolinate. This Ehrlichia ruminantium (strain Gardel) protein is 4-hydroxy-tetrahydrodipicolinate reductase.